A 675-amino-acid chain; its full sequence is Alpha-1,4-glucan:maltose-1-phosphate maltosyltransferase 1 (675 aa).

Positions 264, 324, and 359 each coordinate alpha-maltose 1-phosphate. The Nucleophile role is filled by Asp-394. Alpha-maltose 1-phosphate is bound at residue Asn-395. The Proton donor role is filled by Glu-423. 534–535 (KY) serves as a coordination point for alpha-maltose 1-phosphate.

Belongs to the glycosyl hydrolase 13 family. GlgE subfamily. As to quaternary structure, homodimer.

The enzyme catalyses alpha-maltose 1-phosphate + [(1-&gt;4)-alpha-D-glucosyl](n) = [(1-&gt;4)-alpha-D-glucosyl](n+2) + phosphate. Its activity is regulated as follows. Is competitively inhibited by alpha-, beta- and gamma-cyclodextrins (cyclic maltooligosaccharides), unlike GlgE from M.tuberculosis. Maltosyltransferase that uses maltose 1-phosphate (M1P) as the sugar donor to elongate linear or branched alpha-(1-&gt;4)-glucans. Maltooligosaccharides with a degree of polymerization (DP) superior or equal to 4 are efficient acceptors, with DP6 being optimal in the GlgE-catalyzed polymerization with M1P. Is specific for the alpha-anomer of M1P as substrate, since the beta-anomer of M1P gives no activity. Alpha-D-glucose 1-phosphate cannot serve as a donor substrate, but alpha-maltosyl fluoride is an efficient donor in vitro. Exhibits an alpha-retaining catalytic mechanism, with evidence that maltooligosaccharide acceptors are extended at their non-reducing ends. Is also able to catalyze the reverse reaction in vitro, releasing M1P from glycogen or maltoheptaose in the presence of inorganic phosphate. Also catalyzes disproportionation reactions through maltosyl transfer between maltooligosaccharides. Is probably involved in a branched alpha-glucan biosynthetic pathway from trehalose, together with TreS, Mak and GlgB. The sequence is that of Alpha-1,4-glucan:maltose-1-phosphate maltosyltransferase 1 (glgE1) from Streptomyces coelicolor (strain ATCC BAA-471 / A3(2) / M145).